The sequence spans 151 residues: Large ribosomal subunit protein uL13 (151 aa).

This sequence belongs to the universal ribosomal protein uL13 family. Part of the 50S ribosomal subunit.

Its function is as follows. This protein is one of the early assembly proteins of the 50S ribosomal subunit, although it is not seen to bind rRNA by itself. It is important during the early stages of 50S assembly. The chain is Large ribosomal subunit protein uL13 from Acaryochloris marina (strain MBIC 11017).